The chain runs to 653 residues: Polyadenylate-binding protein, cytoplasmic and nuclear (653 aa).

The span at 1–10 shows a compositional bias: basic and acidic residues; that stretch reads MPSTDLKKQA. Residues 1–77 form a disordered region; sequence MPSTDLKKQA…SVATPSGTAP (77 aa). A compositionally biased stretch (polar residues) spans 17–27; the sequence is DVNTNNEAVES. The segment covering 53 to 68 has biased composition (low complexity); that stretch reads AAEPSESTSTPTNASS. Positions 80 to 158 constitute an RRM 1 domain; the sequence is ASLYVGELDP…RPCRIMWSQR (79 aa). Thr167 carries the post-translational modification Phosphothreonine. RRM domains follow at residues 168–245, 261–338, and 364–441; these read GNVF…HHVS, TNVY…RAQK, and VNLF…LAQR. The PABC domain maps to 569 to 646; sequence PERFTAADLA…AIGVLQEFVD (78 aa).

It belongs to the polyadenylate-binding protein type-1 family. Interacts with cid13.

The protein resides in the cytoplasm. Its subcellular location is the nucleus. In terms of biological role, binds the poly(A) tail of mRNA. Appears to be an important mediator of the multiple roles of the poly(A) tail in mRNA biogenesis, stability and translation. In the nucleus, involved in both mRNA cleavage and polyadenylation. Is also required for efficient mRNA export to the cytoplasm. Acts in concert with a poly(A)-specific nuclease (PAN) to affect poly(A) tail shortening, which may occur concomitantly with either nucleocytoplasmic mRNA transport or translational initiation. In the cytoplasm, stimulates translation initiation and regulates mRNA decay through translation termination-coupled poly(A) shortening, probably mediated by PAN. This is Polyadenylate-binding protein, cytoplasmic and nuclear (pab1) from Schizosaccharomyces pombe (strain 972 / ATCC 24843) (Fission yeast).